A 256-amino-acid chain; its full sequence is Isoprenyl transferase (256 aa).

The active site involves D33. Mg(2+) is bound at residue D33. Substrate is bound by residues 34–37 (GNGR), W38, R46, H50, and 78–80 (STE). Catalysis depends on N81, which acts as the Proton acceptor. Residues W82, R84, R201, and 207–209 (RIS) each bind substrate. A Mg(2+)-binding site is contributed by E220.

Belongs to the UPP synthase family. In terms of assembly, homodimer. Mg(2+) is required as a cofactor.

Catalyzes the condensation of isopentenyl diphosphate (IPP) with allylic pyrophosphates generating different type of terpenoids. This Staphylococcus epidermidis (strain ATCC 35984 / DSM 28319 / BCRC 17069 / CCUG 31568 / BM 3577 / RP62A) protein is Isoprenyl transferase.